Consider the following 370-residue polypeptide: Small ribosomal subunit biogenesis GTPase RsgA (370 aa).

In terms of domain architecture, CP-type G spans 111-270; that stretch reads RSEGQILAAN…LIDTPGLRGV (160 aa). Residues 158–161 and 212–220 each bind GTP; these read TKAD and GQSGAGKST. 4 residues coordinate Zn(2+): Cys293, Cys298, His300, and Cys306.

The protein belongs to the TRAFAC class YlqF/YawG GTPase family. RsgA subfamily. In terms of assembly, monomer. Associates with 30S ribosomal subunit, binds 16S rRNA. Zn(2+) serves as cofactor.

It is found in the cytoplasm. In terms of biological role, one of several proteins that assist in the late maturation steps of the functional core of the 30S ribosomal subunit. Helps release RbfA from mature subunits. May play a role in the assembly of ribosomal proteins into the subunit. Circularly permuted GTPase that catalyzes slow GTP hydrolysis, GTPase activity is stimulated by the 30S ribosomal subunit. This is Small ribosomal subunit biogenesis GTPase RsgA from Streptomyces avermitilis (strain ATCC 31267 / DSM 46492 / JCM 5070 / NBRC 14893 / NCIMB 12804 / NRRL 8165 / MA-4680).